The primary structure comprises 106 residues: MSTAIAQQKIRIRLKAFDRRMLDLSCDKIIETADTTAATAIGPIPLPTKRKIYCVLRSPHVDKDSREHFETRTHRRIIDIYSPSAKTIDALMKLDLPSGVDIEVKL.

It belongs to the universal ribosomal protein uS10 family. Part of the 30S ribosomal subunit.

In terms of biological role, involved in the binding of tRNA to the ribosomes. This Synechococcus sp. (strain WH7803) protein is Small ribosomal subunit protein uS10.